We begin with the raw amino-acid sequence, 520 residues long: GMP synthase [glutamine-hydrolyzing] (520 aa).

Residues 9–202 (TVLIVDFGSQ…VHNIAGIEGD (194 aa)) enclose the Glutamine amidotransferase type-1 domain. Cys-86 functions as the Nucleophile in the catalytic mechanism. Residues His-176 and Glu-178 contribute to the active site. Positions 203-395 (WTMRAYREHA…LGLPESFIGR (193 aa)) constitute a GMPS ATP-PPase domain. 230 to 236 (SGGVDSS) contacts ATP.

As to quaternary structure, homodimer.

It catalyses the reaction XMP + L-glutamine + ATP + H2O = GMP + L-glutamate + AMP + diphosphate + 2 H(+). It participates in purine metabolism; GMP biosynthesis; GMP from XMP (L-Gln route): step 1/1. In terms of biological role, catalyzes the synthesis of GMP from XMP. This is GMP synthase [glutamine-hydrolyzing] from Mesorhizobium japonicum (strain LMG 29417 / CECT 9101 / MAFF 303099) (Mesorhizobium loti (strain MAFF 303099)).